The following is a 104-amino-acid chain: Replication factor A protein 3 (104 aa).

Belongs to the replication factor A protein 3 family. As to quaternary structure, component of the heterotrimeric canonical replication protein A complex (RPA).

It localises to the nucleus. As part of the replication protein A (RPA/RP-A), a single-stranded DNA-binding heterotrimeric complex, may play an essential role in DNA replication, recombination and repair. Binds and stabilizes single-stranded DNA intermediates, preventing complementary DNA reannealing and recruiting different proteins involved in DNA metabolism. This Schizosaccharomyces pombe (strain 972 / ATCC 24843) (Fission yeast) protein is Replication factor A protein 3 (ssb3).